A 612-amino-acid chain; its full sequence is MTEGNQQKQFDSDSFLRHLTHQPGVYRMYDESGDVIYVGKAKDLRKRVSSYFREKVDRMKTQVLVKQIASMDVTVTNTEAEALILENSFIKKYRPRYNVLLRDDKSYPYIILTSHQHPKLGFHRGARRAKGDYFGPFPNGSAVRESLNLLQKLFPIRQCDDSYYRARTRPCLQYQLKRCLAPCVNVCTDDEYNEQVALAKQFLQGKNQQVIDELMNKMEQASTDLDFERAARFRDQIAALRKTQERNSVTGSQQELDVIGLARGNGMTTVQMLFIRDNHLQGSRSYFPKVPTDTPDDEVLRAFLLQFYLSDTAGRKIPREVVLPVDVQPDNVLAEVMSDALSQPVKLQSSVRGDKRQYQSLAQKNAVNALESRLNQQSTMNRRTQALQQVLEFGVPIQRMECFDISHTMGQQTVASCVVFDQNGPKKSDYRRYNITGITPGDDYAAMSKALAKRYDNAKEQGNIPDILFIDGGKGQLAQAENYFNDWGKEAPVLIGVAKGESRKPGLETLIMAGSHETIPLSKDASALHLIQHIRDESHRFAITGHRQKRAKVKKTSTLEQIDGVGAKRRQAILKNLGGLQEVKNASIDKLASVPGISRSLAEKIYYSFRDE.

Residues 21 to 99 (HQPGVYRMYD…IKKYRPRYNV (79 aa)) form the GIY-YIG domain. A UVR domain is found at 208-243 (QQVIDELMNKMEQASTDLDFERAARFRDQIAALRKT).

Belongs to the UvrC family. In terms of assembly, interacts with UvrB in an incision complex.

It localises to the cytoplasm. Its function is as follows. The UvrABC repair system catalyzes the recognition and processing of DNA lesions. UvrC both incises the 5' and 3' sides of the lesion. The N-terminal half is responsible for the 3' incision and the C-terminal half is responsible for the 5' incision. This is UvrABC system protein C from Idiomarina loihiensis (strain ATCC BAA-735 / DSM 15497 / L2-TR).